A 429-amino-acid polypeptide reads, in one-letter code: Glycine betaine monooxygenase oxygenase subunit (429 aa).

Residues 56–163 (WLIAGMTCEI…VKTAGGYIFI (108 aa)) form the Rieske domain. Residues C98, H100, C118, and H121 each contribute to the [2Fe-2S] cluster site. Residues H217 and H222 each coordinate Fe cation.

It belongs to the bacterial ring-hydroxylating dioxygenase alpha subunit family. As to quaternary structure, the system is composed of an oxygenase subunit (GbcA) and a reductase subunit (GbcB). [2Fe-2S] cluster is required as a cofactor. The cofactor is Fe cation.

The catalysed reaction is glycine betaine + NADH + O2 + H(+) = N,N-dimethylglycine + formaldehyde + NAD(+) + H2O. Involved in degradation of glycine betaine. Part of a Rieske-type oxygenase system that catalyzes the conversion of glycine betaine (GB) to dimethylglycine (DMG). This subunit is the terminal oxygenase component of the system. Required for growth on choline and GB, but not for growth on DMG. This is Glycine betaine monooxygenase oxygenase subunit from Pseudomonas aeruginosa (strain ATCC 15692 / DSM 22644 / CIP 104116 / JCM 14847 / LMG 12228 / 1C / PRS 101 / PAO1).